The sequence spans 505 residues: 2,3-bisphosphoglycerate-independent phosphoglycerate mutase (505 aa).

Aspartate 12 and serine 62 together coordinate Mn(2+). Catalysis depends on serine 62, which acts as the Phosphoserine intermediate. Substrate is bound by residues histidine 123, 153–154, arginine 185, arginine 191, 257–260, and lysine 330; these read RD and RPDR. Aspartate 397, histidine 401, aspartate 438, histidine 439, and histidine 456 together coordinate Mn(2+).

It belongs to the BPG-independent phosphoglycerate mutase family. In terms of assembly, monomer. The cofactor is Mn(2+).

The enzyme catalyses (2R)-2-phosphoglycerate = (2R)-3-phosphoglycerate. It functions in the pathway carbohydrate degradation; glycolysis; pyruvate from D-glyceraldehyde 3-phosphate: step 3/5. In terms of biological role, catalyzes the interconversion of 2-phosphoglycerate and 3-phosphoglycerate. In Staphylococcus epidermidis (strain ATCC 35984 / DSM 28319 / BCRC 17069 / CCUG 31568 / BM 3577 / RP62A), this protein is 2,3-bisphosphoglycerate-independent phosphoglycerate mutase.